Reading from the N-terminus, the 901-residue chain is HTH-type transcriptional regulator MalT (901 aa).

39–46 (SPAGYGKT) is an ATP binding site. In terms of domain architecture, HTH luxR-type spans 829–894 (ELIRTSPLTQ…DAVQHAQQLL (66 aa)). Residues 853 to 872 (NEQIAGELDVAATTIKTHIR) constitute a DNA-binding region (H-T-H motif).

Belongs to the MalT family. Monomer in solution. Oligomerizes to an active state in the presence of the positive effectors ATP and maltotriose.

Its activity is regulated as follows. Activated by ATP and maltotriose, which are both required for DNA binding. Its function is as follows. Positively regulates the transcription of the maltose regulon whose gene products are responsible for uptake and catabolism of malto-oligosaccharides. Specifically binds to the promoter region of its target genes, recognizing a short DNA motif called the MalT box. The polypeptide is HTH-type transcriptional regulator MalT (Klebsiella pneumoniae subsp. pneumoniae (strain ATCC 700721 / MGH 78578)).